The following is a 473-amino-acid chain: Aspartyl/glutamyl-tRNA(Asn/Gln) amidotransferase subunit B (473 aa).

Belongs to the GatB/GatE family. GatB subfamily. In terms of assembly, heterotrimer of A, B and C subunits.

The catalysed reaction is L-glutamyl-tRNA(Gln) + L-glutamine + ATP + H2O = L-glutaminyl-tRNA(Gln) + L-glutamate + ADP + phosphate + H(+). It catalyses the reaction L-aspartyl-tRNA(Asn) + L-glutamine + ATP + H2O = L-asparaginyl-tRNA(Asn) + L-glutamate + ADP + phosphate + 2 H(+). Allows the formation of correctly charged Asn-tRNA(Asn) or Gln-tRNA(Gln) through the transamidation of misacylated Asp-tRNA(Asn) or Glu-tRNA(Gln) in organisms which lack either or both of asparaginyl-tRNA or glutaminyl-tRNA synthetases. The reaction takes place in the presence of glutamine and ATP through an activated phospho-Asp-tRNA(Asn) or phospho-Glu-tRNA(Gln). The sequence is that of Aspartyl/glutamyl-tRNA(Asn/Gln) amidotransferase subunit B from Methanococcoides burtonii (strain DSM 6242 / NBRC 107633 / OCM 468 / ACE-M).